The sequence spans 483 residues: MQPISPGAAVLVVGAGITGRAVLAALAPLGARATLTDDSPTALTASAQQRVEVLDPATAVDRIADFDLVVVSPGIPPTAPIPVAAAAAGIPVWGDVELAWHLDRSGRFGPPRQWLVVTGTNGKTTTTSMLYAMLQAGGRRAVLCGNIGDPVLSQLDRPADVLAVELSSFQLHWAPSLRPEAGAVLNVAEDHLDWHGSMAAYAGDKARALTGRVAVGGLDDAIAAGLLADAPAPVKVGFRLGDPGPGEFGVRDGVLIDNAFGRDLALADADTIPVAGPVGVLDALAAAALARAVDVPAAAIAEALATFHVGRHRAEVVAVADGITYVDDSKATNPHAAQASVSAFPRVVWVAGGLLKGASVDEMVEATKDRLVGVVLIGRDRAIVGNALSRHAPDVPVVELVTGEDSVVLEKDESGVTRVTRVIQTGDRTLADAVMTAAVDAARGLATSGDTVLLAPAGASFDQFTGYGHRGDAFAAAVRAAIR.

Residue 119 to 125 participates in ATP binding; the sequence is GTNGKTT.

The protein belongs to the MurCDEF family.

Its subcellular location is the cytoplasm. The catalysed reaction is UDP-N-acetyl-alpha-D-muramoyl-L-alanine + D-glutamate + ATP = UDP-N-acetyl-alpha-D-muramoyl-L-alanyl-D-glutamate + ADP + phosphate + H(+). Its pathway is cell wall biogenesis; peptidoglycan biosynthesis. Cell wall formation. Catalyzes the addition of glutamate to the nucleotide precursor UDP-N-acetylmuramoyl-L-alanine (UMA). This chain is UDP-N-acetylmuramoylalanine--D-glutamate ligase, found in Mycolicibacterium vanbaalenii (strain DSM 7251 / JCM 13017 / BCRC 16820 / KCTC 9966 / NRRL B-24157 / PYR-1) (Mycobacterium vanbaalenii).